An 880-amino-acid chain; its full sequence is Leucine--tRNA ligase (880 aa).

Residues 46-56 carry the 'HIGH' region motif; that stretch reads PYPSGALHMGH. The short motif at 638 to 642 is the 'KMSKS' region element; it reads KMSKS. Lysine 641 contributes to the ATP binding site.

The protein belongs to the class-I aminoacyl-tRNA synthetase family.

Its subcellular location is the cytoplasm. It carries out the reaction tRNA(Leu) + L-leucine + ATP = L-leucyl-tRNA(Leu) + AMP + diphosphate. This Xanthomonas oryzae pv. oryzae (strain KACC10331 / KXO85) protein is Leucine--tRNA ligase.